A 721-amino-acid chain; its full sequence is MPRAKPMPKLPAEAYAIIEGRHADPFHYLGLHPEGGKSVVRAFLPEASNVEAVGEHGEVARLDRVHDAGLFVGALPNGSKHYQLRAKFGDSIVEFEDAYRFPPILTDFDLYLLGEGTHQRLYDKLGAHPMTLDGVDGIGFVVLAPNARRVSVVGDFNFWDSRRHPMRVRGSGYWELFIPHAKRGDHYKFDIVGPHGHQLPLKSDPMAFASEVRPKTASIVFDEAHLPRPRPAPDGINALSAPMSIYEVHLGSWRRKGDNEWLTYRELAEQLPAYARDMGFTHLEFLPVSEHPFDGSWGYQPTGLYAPTSRFGTPEDFAALVDACHREGVGVLLDWVPGHFPDDPHGLGSFDGTSLYEHANPLQGRHLDWGTLIYNYGRTEVTNFLVSNALFWLERYAIDGLRVDAVASMLYLDYSRPPGAWIPNQYGGRENIEAIAFLRRFNTELFARFPQATTAAEESTAWPQVSRPVEFGGLGFGYKWNMGWMHDTLNYISKDPIHRKHHHGEILFGLHYAFSENFILPLSHDEVVHGKRSILGRMPGDEWQRFANLRAYYSFMFGHPGKKLLFMGAEIAQSREWNHDQSLDWHLLEYKYHSGIQALIRDLNRLYRAVPALHQMDCDQAGFEWLITDDANRNVFAWLRKGLDEHARCLVIVNFSPNVYRNYRVRVPFAGKWKEVLNSDSAHYGGSNVGNIGEVHAVDGKTPELRLTIPPLAAIFLVPES.

D404 serves as the catalytic Nucleophile. Residue E457 is the Proton donor of the active site.

Belongs to the glycosyl hydrolase 13 family. GlgB subfamily. In terms of assembly, monomer.

The enzyme catalyses Transfers a segment of a (1-&gt;4)-alpha-D-glucan chain to a primary hydroxy group in a similar glucan chain.. It functions in the pathway glycan biosynthesis; glycogen biosynthesis. Catalyzes the formation of the alpha-1,6-glucosidic linkages in glycogen by scission of a 1,4-alpha-linked oligosaccharide from growing alpha-1,4-glucan chains and the subsequent attachment of the oligosaccharide to the alpha-1,6 position. This Bradyrhizobium diazoefficiens (strain JCM 10833 / BCRC 13528 / IAM 13628 / NBRC 14792 / USDA 110) protein is 1,4-alpha-glucan branching enzyme GlgB.